Reading from the N-terminus, the 158-residue chain is Antitoxin TacA (158 aa).

This sequence belongs to the TacA antitoxin family. As to quaternary structure, forms a complex with cognate toxin TacT.

Antitoxin component of a type II toxin-antitoxin (TA) system. Counteracts the toxic effect of cognate toxin TacT. In terms of biological role, tacA-TacT both represses and derepresses expression of its own operon. The chain is Antitoxin TacA from Mycobacterium tuberculosis (strain ATCC 25618 / H37Rv).